Here is a 282-residue protein sequence, read N- to C-terminus: Formate channel FocB (282 aa).

Over 1-35 (MRNKLSFDLQLSARKAAIAERIAAHKIARSKVSVF) the chain is Cytoplasmic. Residues 36 to 56 (LMAMSAGVFMAIGFTFYLSVI) form a helical membrane-spanning segment. At 57-68 (ADAPSSQALTHL) the chain is on the periplasmic side. The helical transmembrane segment at 69-89 (VGGLCFTLGFILLAVCGTSLF) threads the bilayer. The Cytoplasmic portion of the chain corresponds to 90-112 (TSSVMTVMAKSRGVISWRTWLIN). Residues 113–133 (ALLVACGNLAGIACFSLLIWF) form a helical membrane-spanning segment. Residues 134-163 (SGLVMSENAMWGVAVLHCAEGKMHHTFTES) are Periplasmic-facing. A helical transmembrane segment spans residues 164 to 184 (VSLGIMCNLMVCLALWMSYCG). Topologically, residues 185 to 190 (RSLCDK) are cytoplasmic. A helical membrane pass occupies residues 191 to 211 (IVAMILPITLFVASGFEHCIA). At 212–248 (NLFVIPFAIAIRHFAPPPFWQLAHSSADNFPALTVSH) the chain is on the periplasmic side. A helical transmembrane segment spans residues 249–269 (FITANLLPVMLGNIIGGAVLV). At 270-282 (SMCYRAIYLRQEP) the chain is on the cytoplasmic side.

The protein belongs to the FNT transporter (TC 1.A.16) family.

It localises to the cell inner membrane. It catalyses the reaction formate(in) = formate(out). The direction of formate translocation depends on external pH and electron donor source. Functionally, involved in the bidirectional transport of formate during mixed-acid fermentation. This is Formate channel FocB from Escherichia coli (strain K12).